Consider the following 151-residue polypeptide: Ribosome maturation factor RimP (151 aa).

The protein belongs to the RimP family.

The protein localises to the cytoplasm. Required for maturation of 30S ribosomal subunits. The polypeptide is Ribosome maturation factor RimP (Halorhodospira halophila (strain DSM 244 / SL1) (Ectothiorhodospira halophila (strain DSM 244 / SL1))).